The chain runs to 308 residues: Flavonol synthase 3 (308 aa).

One can recognise a Fe2OG dioxygenase domain in the interval 167 to 267; it reads TIEYLMKINY…RISWPVFVES (101 aa). Residue 175–177 participates in 2-oxoglutarate binding; the sequence is NYY. Fe cation-binding residues include H192, D194, and H248. 2-oxoglutarate is bound at residue 258–260; it reads RIS.

This sequence belongs to the iron/ascorbate-dependent oxidoreductase family. It depends on Fe(2+) as a cofactor. Widely expressed at low levels.

The catalysed reaction is a (2R,3R)-dihydroflavonol + 2-oxoglutarate + O2 = a flavonol + succinate + CO2 + H2O. It functions in the pathway secondary metabolite biosynthesis; flavonoid biosynthesis. In terms of biological role, catalyzes the formation of flavonols from dihydroflavonols. Possesses low activity in vitro towards dihydrokaempferol and dihydroquercetin producing kaempferol and quercitin, respectively. The sequence is that of Flavonol synthase 3 from Arabidopsis thaliana (Mouse-ear cress).